A 426-amino-acid polypeptide reads, in one-letter code: Proline--tRNA ligase (426 aa).

The protein belongs to the class-II aminoacyl-tRNA synthetase family. ProS type 2 subfamily. Homodimer.

It localises to the cytoplasm. It catalyses the reaction tRNA(Pro) + L-proline + ATP = L-prolyl-tRNA(Pro) + AMP + diphosphate. Catalyzes the attachment of proline to tRNA(Pro) in a two-step reaction: proline is first activated by ATP to form Pro-AMP and then transferred to the acceptor end of tRNA(Pro). In Rickettsia rickettsii (strain Iowa), this protein is Proline--tRNA ligase.